A 775-amino-acid chain; its full sequence is DNA polymerase (775 aa).

This sequence belongs to the DNA polymerase type-B family. In terms of assembly, monomer.

The catalysed reaction is DNA(n) + a 2'-deoxyribonucleoside 5'-triphosphate = DNA(n+1) + diphosphate. Functionally, in addition to polymerase activity, this DNA polymerase exhibits 3' to 5' exonuclease activity. The sequence is that of DNA polymerase (pol) from Pyrococcus glycovorans.